Reading from the N-terminus, the 201-residue chain is ATP-dependent Clp protease proteolytic subunit (201 aa).

Ser101 acts as the Nucleophile in catalysis. His126 is a catalytic residue.

The protein belongs to the peptidase S14 family. As to quaternary structure, fourteen ClpP subunits assemble into 2 heptameric rings which stack back to back to give a disk-like structure with a central cavity, resembling the structure of eukaryotic proteasomes.

It localises to the cytoplasm. The catalysed reaction is Hydrolysis of proteins to small peptides in the presence of ATP and magnesium. alpha-casein is the usual test substrate. In the absence of ATP, only oligopeptides shorter than five residues are hydrolyzed (such as succinyl-Leu-Tyr-|-NHMec, and Leu-Tyr-Leu-|-Tyr-Trp, in which cleavage of the -Tyr-|-Leu- and -Tyr-|-Trp bonds also occurs).. Its function is as follows. Cleaves peptides in various proteins in a process that requires ATP hydrolysis. Has a chymotrypsin-like activity. Plays a major role in the degradation of misfolded proteins. This chain is ATP-dependent Clp protease proteolytic subunit, found in Francisella tularensis subsp. tularensis (strain FSC 198).